The chain runs to 335 residues: Nucleoid-associated protein YejK (335 aa).

This sequence belongs to the YejK family.

The protein localises to the cytoplasm. It is found in the nucleoid. This chain is Nucleoid-associated protein YejK, found in Shigella sonnei (strain Ss046).